The following is a 614-amino-acid chain: Vitamin B12 transporter BtuB (614 aa).

The first 20 residues, 1 to 20 (MIKKASLLTACSVTAFSAWA), serve as a signal peptide directing secretion. The Periplasmic portion of the chain corresponds to 21–157 (QDTSPDTLVV…NIITTRDEPG (137 aa)). The short motif at 26 to 33 (DTLVVTAN) is the TonB box element. The TBDR plug domain maps to 38–152 (PRSTVLAPTT…IGGVVNIITT (115 aa)). Cyanocob(III)alamin-binding positions include Leu-83, Ser-85, Asn-92, and 110-111 (VS). The TBDR beta-barrel domain occupies 155–614 (EPGTEISAGW…EYTLSGSYTF (460 aa)). A beta stranded membrane pass occupies residues 158 to 165 (TEISAGWG). Residues 166–168 (SNS) lie on the Extracellular side of the membrane. The beta stranded transmembrane segment at 169–178 (YQNYDVSTQQ) threads the bilayer. Over 179–183 (QLGDK) the chain is Periplasmic. The beta stranded transmembrane segment at 184–195 (TRVTLLGDYAHT) threads the bilayer. The Extracellular portion of the chain corresponds to 196–216 (HGYDVVAYGNTGTQAQTDNDG). Asp-199, Gln-211, Asp-213, and Asp-215 together coordinate Ca(2+). The chain crosses the membrane as a beta stranded span at residues 217-227 (FLSKTLYGALE). Topologically, residues 228–231 (HNFT) are periplasmic. Residues 232–248 (DAWSGFVRGYGYDNRTN) form a beta stranded membrane-spanning segment. Tyr-249 and Asp-250 together coordinate Ca(2+). At 249–262 (YDAYYSPGSPLLDT) the chain is on the extracellular side. Cyanocob(III)alamin is bound at residue Ala-251. Asp-261 serves as a coordination point for Ca(2+). Residues 263 to 277 (RKLYSQSWDAGLRYN) traverse the membrane as a beta stranded segment. A topological domain (periplasmic) is located at residue Gly-278. A beta stranded membrane pass occupies residues 279–296 (ELIKSQLITSYSHSKDYN). The Extracellular segment spans residues 297–308 (YDPHYGRYDSSA). Cyanocob(III)alamin is bound at residue Thr-309. Residues 309–325 (TLDEMKQYTVQWANNVI) form a beta stranded membrane-spanning segment. Residues 326 to 327 (VG) lie on the Periplasmic side of the membrane. Residues 328–337 (HGSIGAGVDW) traverse the membrane as a beta stranded segment. The Extracellular segment spans residues 338–352 (QKQTTTPGTGYVEDG). Residues 353–369 (YDQRNTGIYLTGLQQVG) traverse the membrane as a beta stranded segment. Position 370 (Asp-370) is a topological domain, periplasmic. A beta stranded transmembrane segment spans residues 371-381 (FTFEGAARSDD). Topologically, residues 382 to 384 (NSQ) are extracellular. A beta stranded transmembrane segment spans residues 385–400 (FGRHGTWQTSAGWEFI). Residues 401-402 (EG) lie on the Periplasmic side of the membrane. Residues 403 to 417 (YRFIASYGTSYKAPN) traverse the membrane as a beta stranded segment. Topologically, residues 418 to 433 (LGQLYGFYGNPNLDPE) are extracellular. The chain crosses the membrane as a beta stranded span at residues 434 to 443 (KSKQWEGAFE). Residues 444-448 (GLTAG) lie on the Periplasmic side of the membrane. The chain crosses the membrane as a beta stranded span at residues 449-458 (VNWRISGYRN). Topologically, residues 459–472 (DVSDLIDYDDHTLK) are extracellular. The beta stranded transmembrane segment at 473 to 490 (YYNEGKARIKGVEATANF) threads the bilayer. Topologically, residues 491-493 (DTG) are periplasmic. A beta stranded transmembrane segment spans residues 494–509 (PLTHTVSYDYVDARNA). The Extracellular segment spans residues 510–516 (ITDTPLL). Arg-517 serves as a coordination point for cyanocob(III)alamin. Residues 517-529 (RRAKQQVKYQLDW) traverse the membrane as a beta stranded segment. Residues 530–534 (QLYDF) lie on the Periplasmic side of the membrane. The chain crosses the membrane as a beta stranded span at residues 535–550 (DWGITYQYLGTRYDKD). Tyr-551 lines the cyanocob(III)alamin pocket. The Extracellular portion of the chain corresponds to 551–557 (YSSYPYQ). The chain crosses the membrane as a beta stranded span at residues 558–572 (TVKMGGVSLWDLAVA). Residues 573-584 (YPVTSHLTVRGK) lie on the Periplasmic side of the membrane. A beta stranded membrane pass occupies residues 585–596 (IANLFDKDYETV). Over 597–601 (YGYQT) the chain is Extracellular. Residues 597–614 (YGYQTAGREYTLSGSYTF) carry the TonB C-terminal box motif. Residues 602–614 (AGREYTLSGSYTF) form a beta stranded membrane-spanning segment.

The protein belongs to the TonB-dependent receptor family. BtuB (TC 1.B.14.3.1) subfamily. Interacts with TonB. In terms of assembly, (Microbial infection) The hairpin motif of the receptor-binding domain of colicin E3 (ColE3) interacts with BtuB without displacing BtuB's central plug. An N-terminal fragment of E3 binds OmpF; trimeric complexes with ColE3, BtuB and OmpF can be cross-linked and immunoprecipitated.

It localises to the cell outer membrane. Its activity is regulated as follows. Calcium increases vitamin B12 binding affinity by a factor of 50-100. With respect to regulation, (Microbial infection) Colicins E1, E3 and K inhibit cyanocobalamin (CN-B12) uptake; E1 and E3 inhibit binding of CN-B12 to cells while colicin K inhibits a later, energy-dependent step of CN-B12. In terms of biological role, involved in the active translocation of vitamin B12 (cyanocobalamin) across the outer membrane to the periplasmic space. It derives its energy for transport by interacting with the trans-periplasmic membrane protein TonB. (Microbial infection) Acts as a receptor for bacteriophages BF23 and C1, and for A and E colicins. Cyanocobalamin (CN-B12) in solid medium protects against colicins E1 and E3. Does not act as the translocon for colicin E3 (ColE3). The translocon is OmpF; trimeric complexes with ColE3, BtuB and OmpF can be cross-linked and immunoprecipitated. The sequence is that of Vitamin B12 transporter BtuB from Escherichia coli (strain K12).